The following is a 436-amino-acid chain: 3-ketoacyl-CoA thiolase (436 aa).

The active-site Acyl-thioester intermediate is Cys99. Active-site proton acceptor residues include His392 and Cys422.

This sequence belongs to the thiolase-like superfamily. Thiolase family. Heterotetramer of two alpha chains (FadJ) and two beta chains (FadI).

The protein localises to the cytoplasm. It carries out the reaction an acyl-CoA + acetyl-CoA = a 3-oxoacyl-CoA + CoA. The protein operates within lipid metabolism; fatty acid beta-oxidation. Its function is as follows. Catalyzes the final step of fatty acid oxidation in which acetyl-CoA is released and the CoA ester of a fatty acid two carbons shorter is formed. The polypeptide is 3-ketoacyl-CoA thiolase (Photobacterium profundum (strain SS9)).